The chain runs to 200 residues: Peptidyl-tRNA hydrolase (200 aa).

Tyrosine 17 provides a ligand contact to tRNA. Catalysis depends on histidine 22, which acts as the Proton acceptor. 3 residues coordinate tRNA: tyrosine 78, asparagine 80, and asparagine 126.

This sequence belongs to the PTH family. Monomer.

Its subcellular location is the cytoplasm. The enzyme catalyses an N-acyl-L-alpha-aminoacyl-tRNA + H2O = an N-acyl-L-amino acid + a tRNA + H(+). Hydrolyzes ribosome-free peptidyl-tRNAs (with 1 or more amino acids incorporated), which drop off the ribosome during protein synthesis, or as a result of ribosome stalling. In terms of biological role, catalyzes the release of premature peptidyl moieties from peptidyl-tRNA molecules trapped in stalled 50S ribosomal subunits, and thus maintains levels of free tRNAs and 50S ribosomes. This is Peptidyl-tRNA hydrolase from Cutibacterium acnes (strain DSM 16379 / KPA171202) (Propionibacterium acnes).